We begin with the raw amino-acid sequence, 459 residues long: Argininosuccinate lyase (459 aa).

Belongs to the lyase 1 family. Argininosuccinate lyase subfamily.

It is found in the cytoplasm. It carries out the reaction 2-(N(omega)-L-arginino)succinate = fumarate + L-arginine. It functions in the pathway amino-acid biosynthesis; L-arginine biosynthesis; L-arginine from L-ornithine and carbamoyl phosphate: step 3/3. This Oceanobacillus iheyensis (strain DSM 14371 / CIP 107618 / JCM 11309 / KCTC 3954 / HTE831) protein is Argininosuccinate lyase.